The chain runs to 430 residues: Gamma-glutamyl phosphate reductase (430 aa).

It belongs to the gamma-glutamyl phosphate reductase family.

The protein localises to the cytoplasm. The catalysed reaction is L-glutamate 5-semialdehyde + phosphate + NADP(+) = L-glutamyl 5-phosphate + NADPH + H(+). It functions in the pathway amino-acid biosynthesis; L-proline biosynthesis; L-glutamate 5-semialdehyde from L-glutamate: step 2/2. In terms of biological role, catalyzes the NADPH-dependent reduction of L-glutamate 5-phosphate into L-glutamate 5-semialdehyde and phosphate. The product spontaneously undergoes cyclization to form 1-pyrroline-5-carboxylate. This Rhodopseudomonas palustris (strain ATCC BAA-98 / CGA009) protein is Gamma-glutamyl phosphate reductase.